The following is a 287-amino-acid chain: Lipoyl synthase (287 aa).

Residues cysteine 34, cysteine 39, cysteine 45, cysteine 60, cysteine 64, cysteine 67, and serine 273 each contribute to the [4Fe-4S] cluster site. In terms of domain architecture, Radical SAM core spans 46–262 (WNKRHATVMI…KYIAYSKGFL (217 aa)).

It belongs to the radical SAM superfamily. Lipoyl synthase family. Requires [4Fe-4S] cluster as cofactor.

Its subcellular location is the cytoplasm. The catalysed reaction is [[Fe-S] cluster scaffold protein carrying a second [4Fe-4S](2+) cluster] + N(6)-octanoyl-L-lysyl-[protein] + 2 oxidized [2Fe-2S]-[ferredoxin] + 2 S-adenosyl-L-methionine + 4 H(+) = [[Fe-S] cluster scaffold protein] + N(6)-[(R)-dihydrolipoyl]-L-lysyl-[protein] + 4 Fe(3+) + 2 hydrogen sulfide + 2 5'-deoxyadenosine + 2 L-methionine + 2 reduced [2Fe-2S]-[ferredoxin]. It participates in protein modification; protein lipoylation via endogenous pathway; protein N(6)-(lipoyl)lysine from octanoyl-[acyl-carrier-protein]: step 2/2. In terms of biological role, catalyzes the radical-mediated insertion of two sulfur atoms into the C-6 and C-8 positions of the octanoyl moiety bound to the lipoyl domains of lipoate-dependent enzymes, thereby converting the octanoylated domains into lipoylated derivatives. The polypeptide is Lipoyl synthase (Wolbachia sp. subsp. Brugia malayi (strain TRS)).